Consider the following 398-residue polypeptide: ATP-dependent (S)-NAD(P)H-hydrate dehydratase 1 (398 aa).

Positions 80–391 (LLRKAFQMIP…GYIGEAFELV (312 aa)) constitute a YjeF C-terminal domain. (6S)-NADPHX-binding positions include Gly-187 and 240 to 246 (NHVEFQR). ATP is bound by residues 280–284 (KGSID) and 300–309 (GSPKRCGGQG). Asp-310 serves as a coordination point for (6S)-NADPHX.

It belongs to the NnrD/CARKD family. Requires Mg(2+) as cofactor.

It is found in the cytoplasm. The enzyme catalyses (6S)-NADHX + ATP = ADP + phosphate + NADH + H(+). It carries out the reaction (6S)-NADPHX + ATP = ADP + phosphate + NADPH + H(+). Its function is as follows. Catalyzes the dehydration of the S-form of NAD(P)HX at the expense of ATP, which is converted to ADP. Together with NAD(P)HX epimerase, which catalyzes the epimerization of the S- and R-forms, the enzyme allows the repair of both epimers of NAD(P)HX, a damaged form of NAD(P)H that is a result of enzymatic or heat-dependent hydration. The protein is ATP-dependent (S)-NAD(P)H-hydrate dehydratase 1 of Puccinia graminis f. sp. tritici (strain CRL 75-36-700-3 / race SCCL) (Black stem rust fungus).